A 162-amino-acid polypeptide reads, in one-letter code: MPREFKSFGSTEKSLLSKGHGEPSYSEIYAEPENFLEIEVHNPKTHIPNGMDSKGMFTDYEIICRTNLPSFHKRVSKVRRRYSDFEFFRKCLIKEISMLNHPKVMVPHLPGKILLSNRFSNEVIEERRQGLNTWMQSVAGHPLLQSGSKVLVRFIEAEKFVG.

The segment at 1-23 (MPREFKSFGSTEKSLLSKGHGEP) is disordered. The region spanning 38 to 161 (IEVHNPKTHI…VRFIEAEKFV (124 aa)) is the PX domain. The a 1,2-diacyl-sn-glycero-3-phospho-(1D-myo-inositol-3-phosphate) site is built by arginine 81, serine 83, lysine 112, and arginine 127.

It belongs to the sorting nexin family. In terms of assembly, monomer. Interacts with RBD2, YIF1, YIP1 and YIP5.

The protein resides in the cytoplasm. It is found in the golgi apparatus membrane. Its subcellular location is the prevacuolar compartment membrane. Its function is as follows. Required for retention of late Golgi membrane proteins. Component of the retrieval machinery that functions by direct interaction with the cytosolic tails of certain TGN membrane proteins during the sorting/budding process at the prevacuolar compartment. Binds phosphatidylinositol 3-phosphate (PtdIns(P3)). The polypeptide is Sorting nexin-3 (SNX3) (Saccharomyces cerevisiae (strain ATCC 204508 / S288c) (Baker's yeast)).